A 285-amino-acid polypeptide reads, in one-letter code: Bifunctional protein FolD (285 aa).

Residues Gly-166–Ser-168 and Ile-232 contribute to the NADP(+) site.

It belongs to the tetrahydrofolate dehydrogenase/cyclohydrolase family. As to quaternary structure, homodimer.

The enzyme catalyses (6R)-5,10-methylene-5,6,7,8-tetrahydrofolate + NADP(+) = (6R)-5,10-methenyltetrahydrofolate + NADPH. The catalysed reaction is (6R)-5,10-methenyltetrahydrofolate + H2O = (6R)-10-formyltetrahydrofolate + H(+). The protein operates within one-carbon metabolism; tetrahydrofolate interconversion. Catalyzes the oxidation of 5,10-methylenetetrahydrofolate to 5,10-methenyltetrahydrofolate and then the hydrolysis of 5,10-methenyltetrahydrofolate to 10-formyltetrahydrofolate. This Buchnera aphidicola subsp. Schizaphis graminum (strain Sg) protein is Bifunctional protein FolD.